Reading from the N-terminus, the 21-residue chain is thr operon leader peptide (21 aa).

This sequence belongs to the thr operon leader peptide family.

In terms of biological role, this protein is involved in control of the biosynthesis of threonine. This is thr operon leader peptide from Salmonella choleraesuis (strain SC-B67).